A 513-amino-acid chain; its full sequence is Probable DNA primase large subunit (513 aa).

4 residues coordinate [4Fe-4S] cluster: Cys-315, Cys-398, Cys-415, and Cys-457.

It belongs to the eukaryotic-type primase large subunit family. In terms of assembly, heterodimer of a small subunit and a large subunit. [4Fe-4S] cluster serves as cofactor.

DNA primase is the polymerase that synthesizes small RNA primers for the Okazaki fragments made during discontinuous DNA replication. This chain is Probable DNA primase large subunit, found in Neurospora crassa (strain ATCC 24698 / 74-OR23-1A / CBS 708.71 / DSM 1257 / FGSC 987).